Consider the following 322-residue polypeptide: Replication factor C small subunit (322 aa).

45–52 (GPPGVGKT) contributes to the ATP binding site.

Belongs to the activator 1 small subunits family. RfcS subfamily. Heteromultimer composed of small subunits (RfcS) and large subunits (RfcL).

In terms of biological role, part of the RFC clamp loader complex which loads the PCNA sliding clamp onto DNA. The polypeptide is Replication factor C small subunit (Methanocella arvoryzae (strain DSM 22066 / NBRC 105507 / MRE50)).